Consider the following 827-residue polypeptide: Xanthomonalisin (827 aa).

An N-terminal signal peptide occupies residues 1–23 (MKIEKTALTVAIALAMSSLSAHA). The propeptide at 24 to 237 (EDAWVSTHTQ…GPNVGTQAAA (214 aa)) is removed in mature form. Positions 241 to 625 (AHHPQDFAAI…GKLNTYAQAN (385 aa)) constitute a Peptidase S53 domain. Active-site charge relay system residues include Glu-312, Asp-316, and Ser-544. Ca(2+)-binding residues include Asp-585, Val-586, Ala-601, Gly-603, and Asp-605. Residues 635–722 (TNAPPVANFS…VTVSSSGGTG (88 aa)) form the PKD domain. Residues 636–827 (NAPPVANFSV…GVSLKATWTN (192 aa)) constitute a propeptide, removed in mature form.

It depends on Ca(2+) as a cofactor. Post-translationally, autocatalytically processed.

Its subcellular location is the secreted. The catalysed reaction is Cleavage of casein.. Inhibited by 1,2-epoxy-3-(p-nitrophenoxy)propane (EPNP), but not by pepstatin, pepstatin Ac (S-PI) and diazoacetyl-DL-norleucine methyl ester (DAN). Not inhibited by metal ions. Functionally, pepstatin-insensitive serine-carboxyl proteinase. Shows activity on acid-denatured hemoglobin and on casein. The protein is Xanthomonalisin of Xanthomonas sp. (strain T-22).